A 462-amino-acid chain; its full sequence is Cysteine proteinase RD21A (462 aa).

The first 21 residues, 1 to 21, serve as a signal peptide directing secretion; that stretch reads MGFLKPTMAILFLAMVAVSSA. The propeptide at 22 to 136 is activation peptide; that stretch reads VDMSIISYDE…LRYEARVGDE (115 aa). N90 carries N-linked (GlcNAc...) asparagine glycosylation. 5 disulfides stabilise this stretch: C158–C200, C192–C233, C291–C342, C375–C387, and C381–C402. C161 is a catalytic residue. Catalysis depends on residues H297 and N317. A propeptide spans 353–462 (removed in mature form); sequence KNGENPPNPG…FWSQGRKNIA (110 aa). N414 is a glycosylation site (N-linked (GlcNAc...) asparagine).

Belongs to the peptidase C1 family. As to quaternary structure, interacts with SERPIN1. Interacts with PRN2. Interacts with WSCP. Interacts with TZF4, TZF5 and TZF6.

The protein resides in the vacuole. It localises to the golgi apparatus. The protein localises to the cytoplasm. It is found in the stress granule. Its subcellular location is the P-body. Inhibited by the cysteine protease inhibitor E64 (L-trans-epoxysuccinyl-leucylamide-(4-guanido)-butane). Functionally, cysteine protease that plays a role in immunity, senescence, and biotic and abiotic stresses. Involved in immunity against the necrotrophic fungal pathogen Botrytis cinerea. Involved in elicitor-stimulated programmed cell death (PCD). During infection by the necrotrophic fungal pathogen Botrytis cinerea, functions as a PCD-promoting protease that is released from the ER body or vacuole to the cytoplasm. Accumulates in endoplasmic reticulum-derived bodies in epidermal cells and may participate in cell death in stressed or injured cells. Involved in water stress-induced cell death through its protease activity that is released to the cytoplasm after vacuolar collapse. Possesses protease activity in vitro and is involved in cell death in the transmitting tract and septum epidermis during flower development. Possesses peptide ligase activity. Can ligate peptides to unmodified N-termini of acceptor proteins. Probably ligates through a thioester intermediate. The sequence is that of Cysteine proteinase RD21A from Arabidopsis thaliana (Mouse-ear cress).